The chain runs to 56 residues: UPF0391 membrane protein Noc_0482 (56 aa).

2 helical membrane-spanning segments follow: residues 1 to 21 (MFGWAVTFLIIALIAALFGFT) and 29 to 49 (HIAWILFVVGLILFVVFLLLG).

It belongs to the UPF0391 family.

The protein resides in the cell membrane. The protein is UPF0391 membrane protein Noc_0482 of Nitrosococcus oceani (strain ATCC 19707 / BCRC 17464 / JCM 30415 / NCIMB 11848 / C-107).